Consider the following 305-residue polypeptide: Homoserine O-acetyltransferase (305 aa).

Cysteine 142 acts as the Acyl-thioester intermediate in catalysis. Residues lysine 163 and serine 192 each contribute to the substrate site. Histidine 235 serves as the catalytic Proton acceptor. The active site involves glutamate 237. Residue arginine 249 participates in substrate binding.

Belongs to the MetA family.

It localises to the cytoplasm. It catalyses the reaction L-homoserine + acetyl-CoA = O-acetyl-L-homoserine + CoA. The protein operates within amino-acid biosynthesis; L-methionine biosynthesis via de novo pathway; O-acetyl-L-homoserine from L-homoserine: step 1/1. In terms of biological role, transfers an acetyl group from acetyl-CoA to L-homoserine, forming acetyl-L-homoserine. This Dinoroseobacter shibae (strain DSM 16493 / NCIMB 14021 / DFL 12) protein is Homoserine O-acetyltransferase.